Here is a 1054-residue protein sequence, read N- to C-terminus: MRFKSVFTLLPLLAQLPSGGASLPNNHGRVENCVRNHDGIHKFRHSNNTYQSMFPGVTWDEDQWVLTTSSLDQGHYQSRGSVANGYIGISVSSVGPFFELDLPVAGDVINGWPLYSRRQSFATISGFFDIQAETNGSNFPWMNQYGGESVISGVPHWSGLILDLGDDDYLDSTVDNVTLSDFKSSYDFKAGVLSWSYTWTPAGDKGSYAITYRLFANKLNVNQAVVDMEITPSQDGHATIVNVLDGYSAVRTDFVESQEDDGAIYSAVRPWGIPDVSAYFYANITGSKHVDLSSRRLIHGKPYVSANESSIAQAADVNFVANEKVRITKFVGAASTDAFPDPQATAKRAVSEALDAGYQRSLRSHVQEWASIMHEDSVDRYVNPTTGKLPDDDNIINSAIIAVANTYYLLQNTVGKNAIRAAQDAPLNVNSFSVGGLVSDSYAGLVFWDADVWMQPGLVASHPEAAQAVTNYRTKLYPQAKKNIETTYTGSKNATYIDPSAAIYPWTSGRFGNCTGTGACWDYQYHLNGDIGLSLIYQWVVSGDTNTFREKHFPIYDSVAALYGSIVERNGSYWTLTNMTDPDEYANHIDAGGFTMPMISETLEYANQFRQQFGLEPNETWTEISENVLVLRENGVTLEYTTMNGTAAVKQADIVLVTYPLVYDNYTAETALTDLDYYANRQSADGPAMTWAIFSIAAGAVSPSGCSAYTYHQYSYAPYARAPFFQLSEQMLDNASINGGTHPAYPFLTGHGGANQVVLFGYLGLRLLPDDAIHIEPNLPPQIPYVKYRTFYWRGWPISAQSNYTHTVLQRSQSAPLDTADRRFANTSIPVFVGLADNATLHHLPPHGPLTVRNREIGTINTIEDNLIQCSPVSSTDAFEQGQFPISVVDGATSTRWQPSSSNASAVTVNLGSTTGRSVQTVASGFHFDWAAAPPVNASVIFHDTPLSDPVAALSSPGPHVRIVANLTNIEQSGPYDPEATDLNEIKIPVGNTTRIELAQEVPVGRYATLVISGNQALAQADGEDHVGATVAEWAILGPKSGSPRRRIQPVPLL.

Residues 1–21 form the signal peptide; the sequence is MRFKSVFTLLPLLAQLPSGGA. N-linked (GlcNAc...) asparagine glycans are attached at residues Asn47, Asn135, Asn176, Asn283, and Asn307. Substrate is bound at residue 448 to 449; that stretch reads WD. 4 N-linked (GlcNAc...) asparagine glycosylation sites follow: Asn493, Asn513, Asn570, and Asn578. Catalysis depends on Glu584, which acts as the Proton donor. N-linked (GlcNAc...) asparagine glycosylation is found at Asn618 and Asn644. Residue 650–651 participates in substrate binding; that stretch reads KQ. N-linked (GlcNAc...) asparagine glycosylation is found at Asn665, Asn734, Asn803, Asn826, Asn838, Asn903, Asn937, Asn966, and Asn992.

The protein belongs to the glycosyl hydrolase 65 family.

The enzyme catalyses alpha,alpha-trehalose + H2O = alpha-D-glucose + beta-D-glucose. The protein is Acid trehalase (treA) of Emericella nidulans (strain FGSC A4 / ATCC 38163 / CBS 112.46 / NRRL 194 / M139) (Aspergillus nidulans).